Reading from the N-terminus, the 238-residue chain is uncharacterized protein (238 aa).

2 disordered regions span residues 123-167 (FRQG…VHGG) and 180-238 (SAMG…AKRR). Positions 152–161 (SGHSPSPGRH) are enriched in low complexity. Residues 207–238 (HRGHGHRFRLLAPRSRPRQRRGGGSRAAAKRR) show a composition bias toward basic residues.

This sequence belongs to the PNP/MTAP phosphorylase family.

This is an uncharacterized protein from Rhodospirillum rubrum.